The sequence spans 498 residues: Neoxanthin synthase, chloroplastic (498 aa).

A chloroplast-targeting transit peptide spans 1–42; that stretch reads METLLKPFPSLLLSSPTPYRSIVQQNPSFLSPTTKKKSRKCL.

The protein belongs to the lycopene cyclase family. As to expression, expressed exclusively in chromoplast-containing tissues of flowers and fruits. Expressed in preanthesis flowers.

The protein localises to the plastid. It localises to the chloroplast. The enzyme catalyses all-trans-violaxanthin = all-trans-neoxanthin. It carries out the reaction a carotenoid psi-end group = a carotenoid beta-end derivative. Its pathway is carotenoid biosynthesis; neoxanthin biosynthesis. It functions in the pathway carotenoid biosynthesis; beta-carotene biosynthesis. In terms of biological role, involved in the synthesis of neoxanthin, the last product of carotenoid synthesis and a precursor of abscisic acid. Involved in the beta-carotene biosynthesis. The chain is Neoxanthin synthase, chloroplastic from Solanum lycopersicum (Tomato).